Reading from the N-terminus, the 81-residue chain is Control protein C.BamHI (81 aa).

One can recognise an HTH cro/C1-type domain in the interval 13–68; the sequence is VRQIRLSKSNMSQEKLAFECDLHRTYISDIERGTRNVSLDNIEKISKALGVQPKDL. Positions 25-44 form a DNA-binding region, H-T-H motif; the sequence is QEKLAFECDLHRTYISDIER.

Its function is as follows. May help modulate methylase (M) and restriction enzyme (R) expression as cells undergo physiological changes such as sporulation or transformation. This chain is Control protein C.BamHI, found in Bacillus amyloliquefaciens (Bacillus velezensis).